Reading from the N-terminus, the 448-residue chain is Probable alpha-galactosidase B (448 aa).

Positions 1 to 23 are cleaved as a signal peptide; that stretch reads MSRFHLPLAAAVVLVSCLWSANA. 2 disulfide bridges follow: Cys46–Cys78 and Cys128–Cys158. Asp156 acts as the Nucleophile in catalysis. Asn163 and Asn181 each carry an N-linked (GlcNAc...) asparagine glycan. Position 226–230 (226–230) interacts with substrate; that stretch reads EWGQA. An N-linked (GlcNAc...) asparagine glycan is attached at Asn237. Asp248 functions as the Proton donor in the catalytic mechanism.

Belongs to the glycosyl hydrolase 27 family.

The protein resides in the secreted. It carries out the reaction Hydrolysis of terminal, non-reducing alpha-D-galactose residues in alpha-D-galactosides, including galactose oligosaccharides, galactomannans and galactolipids.. In terms of biological role, hydrolyzes a variety of simple alpha-D-galactoside as well as more complex molecules such as oligosaccharides and polysaccharides. The protein is Probable alpha-galactosidase B (aglB) of Aspergillus clavatus (strain ATCC 1007 / CBS 513.65 / DSM 816 / NCTC 3887 / NRRL 1 / QM 1276 / 107).